Consider the following 1025-residue polypeptide: Multidrug resistance protein MdtC (1025 aa).

A run of 12 helical transmembrane segments spans residues 15 to 35 (ILIS…LPVA), 333 to 353 (EVEQ…FLFL), 360 to 380 (LIPA…MYLC), 387 to 407 (LSLM…IVVL), 431 to 451 (VGFT…PLLL), 469 to 489 (VAIG…CGWL), 528 to 548 (LTGL…ISIP), 851 to 871 (AQVI…GVLY), 875 to 895 (VHPL…LLAL), 897 to 917 (IFDA…IGIV), 953 to 973 (PIMM…LSGG), and 984 to 1004 (ITIV…TPVV).

This sequence belongs to the resistance-nodulation-cell division (RND) (TC 2.A.6) family. MdtC subfamily. In terms of assembly, part of a tripartite efflux system composed of MdtA, MdtB and MdtC. MdtC forms a heteromultimer with MdtB.

Its subcellular location is the cell inner membrane. The chain is Multidrug resistance protein MdtC from Klebsiella pneumoniae subsp. pneumoniae (strain ATCC 700721 / MGH 78578).